Consider the following 425-residue polypeptide: MVYIEAIDAQEVMDSRGNPTVRAAVRLSDGTRAAAIVPSGASTGKREALELRDGDKERYLGKGVLKACANIKTEIAAQLDGVSPYDQSKIDLILKKIDGTENYSELGANATLGVSMAIARASAQSLRLPLYRYLGGSNALTLPTPMLNIINGGSHADNTVDFQEYMIMPLGFDTFAESLRASAEIYHHLKAILKGSGHITSIGDEGGFAPNLKNNEEPIEIILKAIEQAGYKPLDEIAIALDVASSELVDENGMYHLAGEGKVLDSAGMIAYYENLVAKYPIVSIEDGLSEDDWEGWKLLTQKLGNKIQLVGDDLFVTNKKILQEGIEKNIANAILIKPNQIGSVSETMQSVRLAQRNNYKCIMSHRSGESEDTFIADFAVALNTGEIKTGSTARSERIAKYNRLLEIEREISDAEYIGKTLFKR.

A (2R)-2-phosphoglycerate-binding site is contributed by glutamine 163. Residue glutamate 205 is the Proton donor of the active site. Residues aspartate 242, glutamate 286, and aspartate 313 each contribute to the Mg(2+) site. The (2R)-2-phosphoglycerate site is built by lysine 338, arginine 367, serine 368, and lysine 389. Catalysis depends on lysine 338, which acts as the Proton acceptor.

It belongs to the enolase family. The cofactor is Mg(2+).

The protein localises to the cytoplasm. It localises to the secreted. It is found in the cell surface. It carries out the reaction (2R)-2-phosphoglycerate = phosphoenolpyruvate + H2O. It functions in the pathway carbohydrate degradation; glycolysis; pyruvate from D-glyceraldehyde 3-phosphate: step 4/5. Functionally, catalyzes the reversible conversion of 2-phosphoglycerate (2-PG) into phosphoenolpyruvate (PEP). It is essential for the degradation of carbohydrates via glycolysis. In Helicobacter hepaticus (strain ATCC 51449 / 3B1), this protein is Enolase.